We begin with the raw amino-acid sequence, 299 residues long: tRNA-cytidine(32) 2-sulfurtransferase (299 aa).

The PP-loop motif signature appears at 49 to 54; it reads SGGKDS. The [4Fe-4S] cluster site is built by C124, C127, and C215.

This sequence belongs to the TtcA family. As to quaternary structure, homodimer. Mg(2+) serves as cofactor. It depends on [4Fe-4S] cluster as a cofactor.

It localises to the cytoplasm. It catalyses the reaction cytidine(32) in tRNA + S-sulfanyl-L-cysteinyl-[cysteine desulfurase] + AH2 + ATP = 2-thiocytidine(32) in tRNA + L-cysteinyl-[cysteine desulfurase] + A + AMP + diphosphate + H(+). It participates in tRNA modification. Its function is as follows. Catalyzes the ATP-dependent 2-thiolation of cytidine in position 32 of tRNA, to form 2-thiocytidine (s(2)C32). The sulfur atoms are provided by the cysteine/cysteine desulfurase (IscS) system. The chain is tRNA-cytidine(32) 2-sulfurtransferase from Deinococcus radiodurans (strain ATCC 13939 / DSM 20539 / JCM 16871 / CCUG 27074 / LMG 4051 / NBRC 15346 / NCIMB 9279 / VKM B-1422 / R1).